Here is a 424-residue protein sequence, read N- to C-terminus: MAKQIQAIRGMNDILPTQSPLWQKVEAVLRSSVSAFGYSEIRTPIVESTDLFKRSIGEVTDIVEKEMYTFEDRNSDSLTLRPEGTASTVRAGNEHGLLYNQEQRLWYMGPMFRHERPQKGRYRQFHQFGVEVYGIGSADIDAEVLMLSARLWDLLGIKEHVALELNTLGDPAERAAYRDALIAFLEQHKDKLDEDSQRRMYSNPLRVLDSKDPQVQAILGDAPALMDYLGEDSKTHFSTLCELLDAVGIQYTINPRLVRGLDYYNRTVFEWVTTSLGSQGTVLAGGRYDGLVGQLGGKDTPAVGFAMGLERIVLLLETLELTSDIAPEVDVYVTAMGENCVVEAIKVAQELRQQLPTLKVMSHCGGGNFKKQMKRADKSGAQFALIIGENEIANNQVAIKPLRTNNEQQLVTRSELVAKIAELI.

It belongs to the class-II aminoacyl-tRNA synthetase family. As to quaternary structure, homodimer.

Its subcellular location is the cytoplasm. It catalyses the reaction tRNA(His) + L-histidine + ATP = L-histidyl-tRNA(His) + AMP + diphosphate + H(+). The chain is Histidine--tRNA ligase from Shewanella frigidimarina (strain NCIMB 400).